The chain runs to 855 residues: Pre-mRNA-splicing factor SYF1 (855 aa).

HAT repeat units lie at residues 15-47, 48-80, 90-122, 124-158, 160-192, 198-230, 235-268, 270-305, and 369-407; these read LVFE…FKQG, APKP…ARRA, PAYE…FLMD, GRVT…FLRS, PLPE…SSDR, QRLA…LISQ, VQSL…YYIR, GHFE…FEES, and GRPR…FYED. N6-acetyllysine is present on K420. HAT repeat units lie at residues 498–530, 532–566, 571–605, 643–677, and 679–713; these read GTFQ…FLEE, KYFE…KFIA, RKLE…LEEE, YGVT…MECK, and GEID…FEVR. Residues 810–855 form a disordered region; that stretch reads LAQQVNPEEIQLGEDEDEDEMDLEPNEVRLEQQSVPAAVFGSLKED. Positions 820–834 are enriched in acidic residues; it reads QLGEDEDEDEMDLEP. At S851 the chain carries Phosphoserine.

It belongs to the crooked-neck family. In terms of assembly, associates with RNA polymerase II, the TCR-specific proteins CKN1/CSA and ERCC6/CSB, and XPA. Identified in the spliceosome C complex. Component of the XAB2 complex, a multimeric protein complex composed of XAB2, PRPF19, AQR, ZNF830, ISY1, and PPIE. Identified in a pentameric intron-binding (IB) complex composed of AQR, XAB2, ISY1, ZNF830 and PPIE that is incorporated into the spliceosome as a preassembled complex. The IB complex does not contain PRPF19.

It localises to the nucleus. Its function is as follows. Involved in pre-mRNA splicing as component of the spliceosome. Involved in transcription-coupled repair (TCR), transcription and pre-mRNA splicing. This chain is Pre-mRNA-splicing factor SYF1 (XAB2), found in Homo sapiens (Human).